The chain runs to 834 residues: Kinesin-like protein KIF18B (834 aa).

The Kinesin motor domain maps to valine 9 to isoleucine 353. Glycine 111–threonine 118 serves as a coordination point for ATP. Residues isoleucine 368–serine 404 adopt a coiled-coil conformation. Disordered regions lie at residues glutamine 400–serine 508, leucine 602–methionine 642, arginine 655–proline 686, and lysine 800–tyrosine 834. A compositionally biased stretch (low complexity) spans serine 411–leucine 432. Threonine 431 carries the post-translational modification Phosphothreonine. Polar residues predominate over residues glutamate 462–threonine 474. Serine 484 bears the Phosphoserine mark. The segment covering threonine 611 to threonine 620 has biased composition (basic and acidic residues). A Nuclear localization signal motif is present at residues proline 619–leucine 627. Phosphoserine occurs at positions 634 and 657. Threonine 669 carries the post-translational modification Phosphothreonine. Serine 814 carries the post-translational modification Phosphoserine.

It belongs to the TRAFAC class myosin-kinesin ATPase superfamily. Kinesin family. In terms of assembly, interacts with MAPRE1; this interaction is required for efficient accumulation at microtubule plus ends. Interacts with KIF2C at microtubule tips; this interaction increases the affinity of both partners for microtubule plus ends and is required for robust microtubule depolymerization. KIF2C phosphorylation by AURKA or AURKB strongly reduces KIF18B-binding.

It localises to the nucleus. The protein resides in the cytoplasm. Its subcellular location is the cytoskeleton. Functionally, in complex with KIF2C, constitutes the major microtubule plus-end depolymerizing activity in mitotic cells. Its major role may be to transport KIF2C and/or MAPRE1 along microtubules. This is Kinesin-like protein KIF18B (Kif18b) from Mus musculus (Mouse).